Consider the following 315-residue polypeptide: 3-oxoacyl-[acyl-carrier-protein] reductase 3, chloroplastic (315 aa).

Residues 1 to 55 (MATTVAATKLTSLKAVKKLGFREIRQVRQWTPLQSSMPHFGSRQSFATSTVVKAQ) constitute a chloroplast transit peptide. Position 77–101 (77–101 (VTGASRGIGKAIALSLGKAGCKVLV)) interacts with NADP(+). Ser209 lines the substrate pocket. Tyr222 acts as the Proton acceptor in catalysis.

This sequence belongs to the short-chain dehydrogenases/reductases (SDR) family. Homotetramer.

It localises to the plastid. The protein localises to the chloroplast. The catalysed reaction is a (3R)-hydroxyacyl-[ACP] + NADP(+) = a 3-oxoacyl-[ACP] + NADPH + H(+). It functions in the pathway lipid metabolism; fatty acid biosynthesis. This Brassica napus (Rape) protein is 3-oxoacyl-[acyl-carrier-protein] reductase 3, chloroplastic (bkr3).